Consider the following 873-residue polypeptide: Bifunctional levopimaradiene synthase, chloroplastic (873 aa).

The transit peptide at 1–59 (MAGVLFANLPCSLQLSPKVPFRQSTNILIPFHKRSSFGFNAQHCVRSHLRLRWNCVGIH) directs the protein to the chloroplast. Lys271 is a binding site for substrate. Mg(2+) contacts are provided by Asp405 and Asp407. Positions 405-408 (DVDD) match the DXDD motif motif. Lys492 provides a ligand contact to substrate. The Mg(2+) site is built by Asp624, Asp628, Asn769, Thr773, and Glu777. The DDXXD motif motif lies at 624–628 (DDLYD).

It belongs to the terpene synthase family. Tpsd subfamily. Requires Mg(2+) as cofactor. In terms of tissue distribution, expressed in roots.

It localises to the plastid. It is found in the chloroplast. It catalyses the reaction (2E,6E,10E)-geranylgeranyl diphosphate = (+)-copalyl diphosphate. The enzyme catalyses (+)-copalyl diphosphate = abieta-8(14),12-diene + diphosphate. The protein operates within terpene metabolism; ginkgolide biosynthesis. Functionally, catalyzes the initial cyclization step in the biosynthesis of ginkgolides, a structurally unique family of diterpenoids that are highly specific platelet-activating-factor receptor antagonists. Bifunctional enzyme that catalyzes two sequential cyclizations of geranylgeranyl diphosphate (GGPP) to levopimaradiene. The sequence is that of Bifunctional levopimaradiene synthase, chloroplastic (LPS) from Ginkgo biloba (Ginkgo).